The following is a 359-amino-acid chain: Histidinol-phosphate aminotransferase (359 aa).

N6-(pyridoxal phosphate)lysine is present on K217.

Belongs to the class-II pyridoxal-phosphate-dependent aminotransferase family. Histidinol-phosphate aminotransferase subfamily. Homodimer. Pyridoxal 5'-phosphate is required as a cofactor.

The catalysed reaction is L-histidinol phosphate + 2-oxoglutarate = 3-(imidazol-4-yl)-2-oxopropyl phosphate + L-glutamate. The protein operates within amino-acid biosynthesis; L-histidine biosynthesis; L-histidine from 5-phospho-alpha-D-ribose 1-diphosphate: step 7/9. The sequence is that of Histidinol-phosphate aminotransferase (hisC) from Salmonella typhimurium (strain LT2 / SGSC1412 / ATCC 700720).